The following is a 677-amino-acid chain: Methionine--tRNA ligase (677 aa).

Positions 15 to 25 (PYANGSIHLGH) match the 'HIGH' region motif. Residues C146, C149, C159, and C162 each contribute to the Zn(2+) site. Positions 333–337 (KMSKS) match the 'KMSKS' region motif. K336 is a binding site for ATP. Residues 575–677 (DFAKVDLRVA…DGAKPGQQVK (103 aa)) enclose the tRNA-binding domain.

This sequence belongs to the class-I aminoacyl-tRNA synthetase family. MetG type 1 subfamily. As to quaternary structure, homodimer. The cofactor is Zn(2+).

It localises to the cytoplasm. The enzyme catalyses tRNA(Met) + L-methionine + ATP = L-methionyl-tRNA(Met) + AMP + diphosphate. Functionally, is required not only for elongation of protein synthesis but also for the initiation of all mRNA translation through initiator tRNA(fMet) aminoacylation. This Klebsiella pneumoniae (strain 342) protein is Methionine--tRNA ligase.